The sequence spans 314 residues: Olfactory receptor 1C1 (314 aa).

Residues M1 to H25 lie on the Extracellular side of the membrane. Residues L26–I49 form a helical membrane-spanning segment. Over G50 to S57 the chain is Cytoplasmic. Residues P58 to P79 traverse the membrane as a helical segment. Residues Q80–Q100 lie on the Extracellular side of the membrane. An intrachain disulfide couples C97 to C189. Residues L101 to Y120 traverse the membrane as a helical segment. Residues D121–C139 are Cytoplasmic-facing. A helical transmembrane segment spans residues L140–L158. Over H159–N195 the chain is Extracellular. Residues V196–G219 traverse the membrane as a helical segment. Topologically, residues L220 to R236 are cytoplasmic. The chain crosses the membrane as a helical span at residues A237–Y259. Over F260–T272 the chain is Extracellular. A helical membrane pass occupies residues L273–L292. The Cytoplasmic portion of the chain corresponds to R293–Q314.

This sequence belongs to the G-protein coupled receptor 1 family.

It is found in the cell membrane. Odorant receptor. The chain is Olfactory receptor 1C1 (OR1C1) from Homo sapiens (Human).